A 309-amino-acid chain; its full sequence is NAD kinase (309 aa).

Aspartate 89 acts as the Proton acceptor in catalysis. Residues 89-90 (DG), 163-164 (NE), arginine 191, aspartate 193, and 204-209 (TAYSLS) each bind NAD(+).

The protein belongs to the NAD kinase family. It depends on a divalent metal cation as a cofactor.

Its subcellular location is the cytoplasm. It carries out the reaction NAD(+) + ATP = ADP + NADP(+) + H(+). In terms of biological role, involved in the regulation of the intracellular balance of NAD and NADP, and is a key enzyme in the biosynthesis of NADP. Catalyzes specifically the phosphorylation on 2'-hydroxyl of the adenosine moiety of NAD to yield NADP. This Shewanella halifaxensis (strain HAW-EB4) protein is NAD kinase.